Consider the following 270-residue polypeptide: 4-hydroxy-tetrahydrodipicolinate reductase (270 aa).

Residues 11-16 (GCNGRM) and E37 contribute to the NAD(+) site. Position 38 (R38) interacts with NADP(+). Residues 101-103 (GTT) and 125-128 (ASNY) contribute to the NAD(+) site. Residue H158 is the Proton donor/acceptor of the active site. H159 is a (S)-2,3,4,5-tetrahydrodipicolinate binding site. K162 functions as the Proton donor in the catalytic mechanism. 168–169 (GT) contributes to the (S)-2,3,4,5-tetrahydrodipicolinate binding site.

It belongs to the DapB family.

It is found in the cytoplasm. The catalysed reaction is (S)-2,3,4,5-tetrahydrodipicolinate + NAD(+) + H2O = (2S,4S)-4-hydroxy-2,3,4,5-tetrahydrodipicolinate + NADH + H(+). The enzyme catalyses (S)-2,3,4,5-tetrahydrodipicolinate + NADP(+) + H2O = (2S,4S)-4-hydroxy-2,3,4,5-tetrahydrodipicolinate + NADPH + H(+). The protein operates within amino-acid biosynthesis; L-lysine biosynthesis via DAP pathway; (S)-tetrahydrodipicolinate from L-aspartate: step 4/4. In terms of biological role, catalyzes the conversion of 4-hydroxy-tetrahydrodipicolinate (HTPA) to tetrahydrodipicolinate. This is 4-hydroxy-tetrahydrodipicolinate reductase from Aeromonas salmonicida (strain A449).